The following is a 465-amino-acid chain: Phosphatidate cytidylyltransferase (465 aa).

Residues 1–60 (MSDQPPAENADVRQRRAPESPVTERLRAPARDDARPTSDESDMEGILQDEDSDAGSKNKE) are disordered. Residues 10–38 (ADVRQRRAPESPVTERLRAPARDDARPTS) show a composition bias toward basic and acidic residues. The segment covering 39 to 53 (DESDMEGILQDEDSD) has biased composition (acidic residues). The next 8 membrane-spanning stretches (helical) occupy residues 95-117 (WVVR…TRGA), 121-143 (MFLV…LAVY), 158-178 (FLLT…WGIV), 187-207 (FLVA…FVSF), 214-234 (GYYM…LLIV), 239-259 (FIIQ…AMII), 288-308 (GFIG…LALY), and 367-387 (IALS…ASGF).

It belongs to the CDS family.

The protein localises to the membrane. It catalyses the reaction a 1,2-diacyl-sn-glycero-3-phosphate + CTP + H(+) = a CDP-1,2-diacyl-sn-glycerol + diphosphate. It participates in phospholipid metabolism; CDP-diacylglycerol biosynthesis; CDP-diacylglycerol from sn-glycerol 3-phosphate: step 3/3. Its function is as follows. Provides CDP-diacylglycerol, an important precursor for the synthesis of phosphatidylinositol (PtdIns). This chain is Phosphatidate cytidylyltransferase (cdgs-1), found in Caenorhabditis elegans.